Reading from the N-terminus, the 393-residue chain is MTIPATRKDLMIVNMGPHHPSMHGVLRLILTLDGEDVIDCEPVLGYLHRGMEKIAENRTIIQYLPYVTRWDYLATMFTEVITVNAPEQLGNIQVPKRAGYIRTIMLELSRIASHLLWLGPFMADIGAQTPFFYIFRERELIYDLFEAATGMRMMHNYFRIGGVAADLPHGWIDKCLDFCNYFLTGLAEYEKLITRNPIFLERVEGIGIIGKEEAISWGLSGPMLRASGMQWDLRKIDNSECYKKFDWEVQWQKEGDSLARYLVRIGEMRESIKMIQQALEGIPGGPYENLEIRCFDRERYPEWGGFEYRFISKKPSPTFELPKQELYVRVEAPKGELGVFLIGDRSSFPWRWKIRPPGFMNLQILPQLVKRMKLADIMTILGSIDIIMGEVDR.

It belongs to the complex I 49 kDa subunit family. In terms of assembly, NDH is composed of at least 16 different subunits, 5 of which are encoded in the nucleus.

Its subcellular location is the plastid. It is found in the chloroplast thylakoid membrane. The catalysed reaction is a plastoquinone + NADH + (n+1) H(+)(in) = a plastoquinol + NAD(+) + n H(+)(out). The enzyme catalyses a plastoquinone + NADPH + (n+1) H(+)(in) = a plastoquinol + NADP(+) + n H(+)(out). Its function is as follows. NDH shuttles electrons from NAD(P)H:plastoquinone, via FMN and iron-sulfur (Fe-S) centers, to quinones in the photosynthetic chain and possibly in a chloroplast respiratory chain. The immediate electron acceptor for the enzyme in this species is believed to be plastoquinone. Couples the redox reaction to proton translocation, and thus conserves the redox energy in a proton gradient. In Pelargonium hortorum (Common geranium), this protein is NAD(P)H-quinone oxidoreductase subunit H, chloroplastic.